A 37-amino-acid chain; its full sequence is Turripeptide Lol6.2 (37 aa).

Cystine bridges form between Cys-4–Cys-16, Cys-8–Cys-21, and Cys-15–Cys-29.

Expressed by the venom duct.

Its subcellular location is the secreted. Its function is as follows. Acts as a neurotoxin by inhibiting an ion channel. This is Turripeptide Lol6.2 from Iotyrris olangoensis (Sea snail).